Reading from the N-terminus, the 632-residue chain is Putative golgin subfamily A member 8I (632 aa).

The interval 1–77 (MAEETQHNKL…SSATLKDLES (77 aa)) is disordered. A compositionally biased stretch (polar residues) spans 38–50 (TNGSIPQTATSGG). Coiled coils occupy residues 86–154 (LDSR…HMKR) and 209–421 (KLEQ…SLMA). Residues 352 to 362 (KQEERIQEQHK) are compositionally biased toward basic and acidic residues. 4 disordered regions span residues 352 to 383 (KQEERIQEQHKSLQQLAKPQSVFEEPNNENKS), 423 to 445 (PGEGHGGEHLDSEGEEAPQPMPS), 496 to 524 (LSEPGGRAKDAALGGGHHQAGAQGGDEGE), and 550 to 569 (AHNPADEPGPGAPAPQELGA). Residues 508 to 520 (LGGGHHQAGAQGG) show a composition bias toward gly residues. Positions 529 to 632 (AADGIAAYSN…CWAWLPRRRR (104 aa)) are golgi-targeting domain. The span at 555-568 (DEPGPGAPAPQELG) shows a compositional bias: low complexity.

The protein belongs to the GOLGA8 family.

It localises to the golgi apparatus. The protein localises to the golgi stack membrane. May be involved in maintaining Golgi structure. This is Putative golgin subfamily A member 8I from Homo sapiens (Human).